The following is a 132-amino-acid chain: Small ribosomal subunit protein uS11 (132 aa).

Belongs to the universal ribosomal protein uS11 family. As to quaternary structure, part of the 30S ribosomal subunit. Interacts with proteins S7 and S18. Binds to IF-3.

Its function is as follows. Located on the platform of the 30S subunit, it bridges several disparate RNA helices of the 16S rRNA. Forms part of the Shine-Dalgarno cleft in the 70S ribosome. The chain is Small ribosomal subunit protein uS11 from Clostridioides difficile (strain 630) (Peptoclostridium difficile).